A 251-amino-acid chain; its full sequence is MLNFLNFYSVPLAELEVGKHLYWQIGNLKLHGQVFLTSWFVIGVLVLASVAASSNVKRIPSGIQNLLEYALEFIRDLAKNQIGEKEYRPWVPFVGTLFLFIFVSNWSGALVPFKLIHLPEGELAAPTSDINTTVALALLTSLAYFYAGFSKKGLGYFGNYVQPVSFMLPFKIIEDFTKPLSLSFRLFGNILADELVVGVLVLLVPLFVPLPVMALGLFTSAIQALIFATLAAAYIGEAMEDHHGEEHEEHH.

5 helical membrane-spanning segments follow: residues 34-54 (VFLTSWFVIGVLVLASVAASS), 93-113 (FVGTLFLFIFVSNWSGALVPF), 130-150 (INTTVALALLTSLAYFYAGFS), 195-215 (LVVGVLVLLVPLFVPLPVMAL), and 216-236 (GLFTSAIQALIFATLAAAYIG).

It belongs to the ATPase A chain family. As to quaternary structure, F-type ATPases have 2 components, CF(1) - the catalytic core - and CF(0) - the membrane proton channel. CF(1) has five subunits: alpha(3), beta(3), gamma(1), delta(1), epsilon(1). CF(0) has four main subunits: a, b, b' and c.

The protein localises to the cellular thylakoid membrane. Its function is as follows. Key component of the proton channel; it plays a direct role in the translocation of protons across the membrane. This chain is ATP synthase subunit a, found in Trichormus variabilis (strain ATCC 29413 / PCC 7937) (Anabaena variabilis).